The sequence spans 127 residues: Fumarate reductase subunit C (127 aa).

3 helical membrane passes run 30-50 (ATVL…GCLV), 58-78 (GWLA…ALLG), and 107-127 (IIVL…LIVV).

Belongs to the FrdC family. As to quaternary structure, part of an enzyme complex containing four subunits: a flavoprotein (FrdA), an iron-sulfur protein (FrdB), and two hydrophobic anchor proteins (FrdC and FrdD).

The protein resides in the cell inner membrane. Its function is as follows. Anchors the catalytic components of the fumarate reductase complex to the cell membrane, binds quinones. This is Fumarate reductase subunit C from Vibrio parahaemolyticus serotype O3:K6 (strain RIMD 2210633).